The sequence spans 394 residues: DNA replication and repair protein RecF (394 aa).

30–37 (GPNAAGKT) is an ATP binding site.

The protein belongs to the RecF family.

The protein localises to the cytoplasm. Functionally, the RecF protein is involved in DNA metabolism; it is required for DNA replication and normal SOS inducibility. RecF binds preferentially to single-stranded, linear DNA. It also seems to bind ATP. This is DNA replication and repair protein RecF from Roseiflexus castenholzii (strain DSM 13941 / HLO8).